We begin with the raw amino-acid sequence, 159 residues long: Small ribosomal subunit protein uS9 (159 aa).

The protein belongs to the universal ribosomal protein uS9 family.

The protein is Small ribosomal subunit protein uS9 of Bradyrhizobium diazoefficiens (strain JCM 10833 / BCRC 13528 / IAM 13628 / NBRC 14792 / USDA 110).